Reading from the N-terminus, the 514-residue chain is Type-2 serine--tRNA ligase (514 aa).

Position 313 (A313) interacts with L-serine. C315 contributes to the Zn(2+) binding site. An L-serine-binding site is contributed by R344. ATP contacts are provided by residues 344–346 (RWE) and 355–356 (RV). 361–363 (RGE) serves as a coordination point for L-serine. Zn(2+) contacts are provided by E363 and C470. ATP is bound at residue R477.

Belongs to the class-II aminoacyl-tRNA synthetase family. Type-2 seryl-tRNA synthetase subfamily. In terms of assembly, homodimer. Zn(2+) is required as a cofactor.

The protein resides in the cytoplasm. It catalyses the reaction tRNA(Ser) + L-serine + ATP = L-seryl-tRNA(Ser) + AMP + diphosphate + H(+). It carries out the reaction tRNA(Sec) + L-serine + ATP = L-seryl-tRNA(Sec) + AMP + diphosphate + H(+). The protein operates within aminoacyl-tRNA biosynthesis; selenocysteinyl-tRNA(Sec) biosynthesis; L-seryl-tRNA(Sec) from L-serine and tRNA(Sec): step 1/1. Its function is as follows. Catalyzes the attachment of serine to tRNA(Ser). Is also able to aminoacylate tRNA(Sec) with serine, to form the misacylated tRNA L-seryl-tRNA(Sec), which will be further converted into selenocysteinyl-tRNA(Sec). In Methanococcus maripaludis (strain C7 / ATCC BAA-1331), this protein is Type-2 serine--tRNA ligase.